Consider the following 282-residue polypeptide: Putative hydrolase Bcep18194_B0137 (282 aa).

Mg(2+)-binding residues include E124, E126, and D155.

It belongs to the FAH family. The cofactor is Mg(2+).

The chain is Putative hydrolase Bcep18194_B0137 from Burkholderia lata (strain ATCC 17760 / DSM 23089 / LMG 22485 / NCIMB 9086 / R18194 / 383).